Here is a 1707-residue protein sequence, read N- to C-terminus: MLPTILSISYEHTYAYLSKYQTAYACEGKKLTIECEPGDVINLIRANYGRFSITICNDHGNVEWSVNCMFPKSLSVLNSRCAHKQSCGVLAATSMFGDPCPGTHKYLEAHYQCISAAQTSTTTNRPSPPPWVLSNGPPIFGNGSGLIHPPGVGAGAPPPPRLPTLPGVVGISGNPGLFNVPPQHTAVTHSTPSSSTTAVGGGRLKGVPTSTTTTKHPAGRHDGLPPPPQLHHHHNHHGDDTATPTKPSSKLPAGGNATSPSNTRILTGVGGSGTDDGTLLTTKSSPNRPPGTAASGAVVPGNGSVVRTINNINLNAAGISGGDDESKLFCGPTHARNLYWNMTRVGDVNVQPCPGGAAGIAKWRCVLMKRMPDSGYDEYDDDPSSTTPAPNGGDCLHNSSSCEPPVSMAHKVNQRLRNFEPTWHPATPDLTQCRSLWLNNLEMRVNQRDSSLISIANDMSEVTSSKTLYGGDMLVTTKIIQTVSEKMLHDKETFPDQRQREAMIMELLHCVVKTGSNLLDESQLSSWLDLNPEDQMRVATSLLTGLEYNAFLLADTIIRERSVVQKVKNILLSVRVLETKTIQSSVVFPDSDQWPLSSDRIELPRAALIDNSEGGLVRIVFAAFDRLESILKPSYDHFDLKSSRSYVRNTAILSNDSDVNAGEIQQRLRILNSKVISASLGKGRHIQLSQPITLTLKHLKTENVTNPTCVFWNYIDHAWSANGCSLESTNRTHSVCSCNHLTNFAILMDVVDEHQHSLFTMFDGNMRIFIYISIGICVVFIVIALLTLKLFNGVFVKSARTSIYTSIYLCLLAIELLFLLGIEQTETSIFCGFITIFLHCAILSGTAWFCYEAFHSYSTLTSDELLLEVDQTPKVNCYYLLSYGLSLSVVAISLVIDPSTYTQNDYCVLMEANALFYATFVIPVLVFFVAAIGYTFLSWIILCRKSRTGLKTKEHTRLASVRFDIRCSFVFLLLLSAVWCSSYFYLRGAKMDDDTADVYGYCFICFNTLLGLYIFVFHCIQNEKIRREYRKYVRQHAWLPKCLRCSKTSISSGIVTGNGPTAGTLCSVSTSKKPKLPLGVSEEAHDDPQQQQHTPVPITEDAIMGASSDCELNEAQQRRTLKSGLMTGTLQAPPQTLGGHVVLERGSTLRSTGHASPTSSAGSTHLIFAHKQQQQQQQQQQGPLGEGYYHQPDYYSWKQPPTGTGGLKTPREYYNNTGASASSPQQAHEVFYWTQKPNSGQHGKKKRGAGGVPASPSGSLHSRTAAASQVLFYPSYKKTKAGQPTGYPQYAEALDPPLATGNAAAYYQQQQQLRRQQLHQQQQQQLSSDEEQVEQHAHLLHLQRRAGSQQQLPAPPPHMAQYQHEFMQRQYRNKHSNCDLGMGDAYYNQGSVGGADGGPVYEEILSNRNSDVQHYEVGDFDVDEVYNNSVGTGVFNNMRAAVAAGGSRYGGGSLSGGSVSSRSQQQQLKKQQQQQSLAQQRSARRCTADDDDDEEEEEDEEATAAEQLHDSVCDEDEEEDESDLEDDAHGLPPQSDERMRRLMAMQDEDFKRRFQRQLRKHGAPLDYGALPPGSGPQPEHNGAVFGVSGGVGEGSMRGAFRQQQALNAKSPGGRLAVNDLFGHGNSGPPLPPANQTPAQKRQQLQKLSPQSTTSSSSHTSHSNPNPHPLQLTHPHPHQHPPHHQQRHLSAMLDENNTVRCYLEPLAK.

The Extracellular segment spans residues 1–767; sequence MLPTILSISY…LFTMFDGNMR (767 aa). An SUEL-type lectin domain is found at 25-114; the sequence is ACEGKKLTIE…KYLEAHYQCI (90 aa). The N-linked (GlcNAc...) asparagine glycan is linked to asparagine 142. Residues 176–301 are disordered; that stretch reads GLFNVPPQHT…TAASGAVVPG (126 aa). Composition is skewed to polar residues over residues 185–198 and 256–265; these read TAVT…STTA and NATSPSNTRI. Asparagine 256 is a glycosylation site (N-linked (GlcNAc...) asparagine). Over residues 275–285 the composition is skewed to low complexity; it reads DDGTLLTTKSS. N-linked (GlcNAc...) asparagine glycosylation is found at asparagine 302, asparagine 341, asparagine 398, asparagine 655, asparagine 703, and asparagine 730. The tract at residues 376 to 400 is disordered; that stretch reads YDEYDDDPSSTTPAPNGGDCLHNSS. Positions 561-754 constitute a GAIN-B domain; it reads RSVVQKVKNI…AILMDVVDEH (194 aa). Intrachain disulfides connect cysteine 709–cysteine 736 and cysteine 724–cysteine 738. The GPS stretch occupies residues 709–754; sequence CVFWNYIDHAWSANGCSLESTNRTHSVCSCNHLTNFAILMDVVDEH. Residues 768–788 form a helical membrane-spanning segment; the sequence is IFIYISIGICVVFIVIALLTL. Residues 789–801 are Cytoplasmic-facing; that stretch reads KLFNGVFVKSART. Residues 802-822 traverse the membrane as a helical segment; the sequence is SIYTSIYLCLLAIELLFLLGI. Topologically, residues 823-828 are extracellular; it reads EQTETS. The chain crosses the membrane as a helical span at residues 829–849; it reads IFCGFITIFLHCAILSGTAWF. Topologically, residues 850–875 are cytoplasmic; the sequence is CYEAFHSYSTLTSDELLLEVDQTPKV. A helical membrane pass occupies residues 876-896; the sequence is NCYYLLSYGLSLSVVAISLVI. Residues 897–920 are Extracellular-facing; it reads DPSTYTQNDYCVLMEANALFYATF. The helical transmembrane segment at 921 to 941 threads the bilayer; sequence VIPVLVFFVAAIGYTFLSWII. The Cytoplasmic portion of the chain corresponds to 942–968; it reads LCRKSRTGLKTKEHTRLASVRFDIRCS. The helical transmembrane segment at 969-989 threads the bilayer; sequence FVFLLLLSAVWCSSYFYLRGA. The Extracellular segment spans residues 990–999; sequence KMDDDTADVY. The helical transmembrane segment at 1000 to 1020 threads the bilayer; sequence GYCFICFNTLLGLYIFVFHCI. Residues 1021–1707 are Cytoplasmic-facing; that stretch reads QNEKIRREYR…VRCYLEPLAK (687 aa). Serine 1156 is subject to Phosphoserine. Disordered regions lie at residues 1169 to 1188 and 1236 to 1260; these read AHKQ…GEGY and KPNS…SGSL. The segment covering 1172-1181 has biased composition (low complexity); sequence QQQQQQQQQQ. Serine 1255 and serine 1262 each carry phosphoserine. The segment covering 1316–1326 has biased composition (low complexity); the sequence is QQLHQQQQQQL. Disordered stretches follow at residues 1316–1335, 1450–1538, 1563–1582, and 1612–1687; these read QQLH…QVEQ, GGGS…SDER, APLD…EHNG, and GGRL…QQRH. Phosphoserine occurs at positions 1327 and 1328. Low complexity predominate over residues 1456-1481; it reads GGSVSSRSQQQQLKKQQQQQSLAQQR. Acidic residues-rich tracts occupy residues 1489–1503 and 1513–1526; these read DDDD…EEAT and CDED…DLED. The span at 1635–1650 shows a compositional bias: polar residues; sequence QTPAQKRQQLQKLSPQ. A compositionally biased stretch (low complexity) spans 1651-1673; the sequence is STTSSSSHTSHSNPNPHPLQLTH. Residues 1674–1686 are compositionally biased toward basic residues; that stretch reads PHPHQHPPHHQQR.

Belongs to the G-protein coupled receptor 2 family. LN-TM7 subfamily. In terms of assembly, forms a heterodimer, consisting of a large extracellular region non-covalently linked to a seven-transmembrane moiety. Proteolytically cleaved into 2 subunits, an extracellular subunit and a seven-transmembrane subunit.

The protein localises to the cell membrane. This Drosophila yakuba (Fruit fly) protein is Latrophilin Cirl.